We begin with the raw amino-acid sequence, 241 residues long: Class B acid phosphatase (241 aa).

Residues Met-1–Ala-27 form the signal peptide. The Nucleophile role is filled by Asp-72. 2 residues coordinate Mg(2+): Asp-72 and Asp-74. Asp-74 acts as the Proton donor in catalysis. Residues Thr-141–Gly-142 and Lys-181 each bind substrate. A Mg(2+)-binding site is contributed by Asp-196.

It belongs to the class B bacterial acid phosphatase family. As to quaternary structure, homotetramer. It depends on Mg(2+) as a cofactor.

The protein localises to the periplasm. It catalyses the reaction a phosphate monoester + H2O = an alcohol + phosphate. In terms of biological role, dephosphorylates several organic phosphate monoesters. Also has a phosphotransferase activity catalyzing the transfer of low-energy phosphate groups from organic phosphate monoesters to free hydroxyl groups of various organic compounds. The protein is Class B acid phosphatase of Edwardsiella ictaluri (strain 93-146).